Consider the following 471-residue polypeptide: tRNA-2-methylthio-N(6)-dimethylallyladenosine synthase (471 aa).

The region spanning 31-149 is the MTTase N-terminal domain; the sequence is LYYHIETYGC…FPQLLWEALN (119 aa). Cys-40, Cys-76, Cys-110, Cys-186, Cys-190, and Cys-193 together coordinate [4Fe-4S] cluster. The Radical SAM core domain occupies 172–402; that stretch reads RDSNLKAWVN…IELQNKISLE (231 aa). One can recognise a TRAM domain in the interval 405-468; the sequence is AELRGKIVEV…AWTMQGELVE (64 aa).

Belongs to the methylthiotransferase family. MiaB subfamily. As to quaternary structure, monomer. It depends on [4Fe-4S] cluster as a cofactor.

It is found in the cytoplasm. It catalyses the reaction N(6)-dimethylallyladenosine(37) in tRNA + (sulfur carrier)-SH + AH2 + 2 S-adenosyl-L-methionine = 2-methylsulfanyl-N(6)-dimethylallyladenosine(37) in tRNA + (sulfur carrier)-H + 5'-deoxyadenosine + L-methionine + A + S-adenosyl-L-homocysteine + 2 H(+). Catalyzes the methylthiolation of N6-(dimethylallyl)adenosine (i(6)A), leading to the formation of 2-methylthio-N6-(dimethylallyl)adenosine (ms(2)i(6)A) at position 37 in tRNAs that read codons beginning with uridine. This Thermoanaerobacter sp. (strain X514) protein is tRNA-2-methylthio-N(6)-dimethylallyladenosine synthase.